The following is a 455-amino-acid chain: Keratin, type I cuticular Ha5 (455 aa).

The interval 1–97 is head; that stretch reads MASKCLKAGF…FGEGILTGNE (97 aa). The IF rod domain maps to 97-408; sequence EKETMQSLND…GLLESEDSKL (312 aa). The segment at 98 to 132 is coil 1A; it reads KETMQSLNDRLAGYLEKVRQLEQENASLESRIREW. The interval 133 to 143 is linker 1; that stretch reads CEQQVPYMCPD. Residues 144 to 244 form a coil 1B region; it reads YQSYFRTIEE…HEEEVNSLRC (101 aa). Residues 245–260 are linker 12; it reads QLGDRLNVEVDAAPPV. The segment at 261–404 is coil 2; that stretch reads DLNRVLEEMR…NTYRGLLESE (144 aa). Positions 405 to 455 are tail; it reads DSKLPCNPCAPDYSPSKSCLPCLPAASCGPSAARTNCSPRPICVPCPGGRF.

Belongs to the intermediate filament family. Early expression in the hair follicle, mainly found in supramatricial cells and lowermost cortical cells of the hair bulb.

The polypeptide is Keratin, type I cuticular Ha5 (KRT35) (Homo sapiens (Human)).